The sequence spans 187 residues: Large ribosomal subunit protein uL22B (187 aa).

Belongs to the universal ribosomal protein uL22 family. Component of the large ribosomal subunit (LSU). Mature yeast ribosomes consist of a small (40S) and a large (60S) subunit. The 40S small subunit contains 1 molecule of ribosomal RNA (18S rRNA) and at least 33 different proteins. The large 60S subunit contains 3 rRNA molecules (25S, 5.8S and 5S rRNA) and at least 46 different proteins. uL22 is associated with the polypeptide exit tunnel.

Its subcellular location is the cytoplasm. Its function is as follows. Component of the ribosome, a large ribonucleoprotein complex responsible for the synthesis of proteins in the cell. The small ribosomal subunit (SSU) binds messenger RNAs (mRNAs) and translates the encoded message by selecting cognate aminoacyl-transfer RNA (tRNA) molecules. The large subunit (LSU) contains the ribosomal catalytic site termed the peptidyl transferase center (PTC), which catalyzes the formation of peptide bonds, thereby polymerizing the amino acids delivered by tRNAs into a polypeptide chain. The nascent polypeptides leave the ribosome through a tunnel in the LSU and interact with protein factors that function in enzymatic processing, targeting, and the membrane insertion of nascent chains at the exit of the ribosomal tunnel. The polypeptide is Large ribosomal subunit protein uL22B (rpl1702) (Schizosaccharomyces pombe (strain 972 / ATCC 24843) (Fission yeast)).